The following is a 287-amino-acid chain: 3-methyl-2-oxobutanoate hydroxymethyltransferase (287 aa).

Asp-57 and Asp-96 together coordinate Mg(2+). 3-methyl-2-oxobutanoate-binding positions include Asp-57–Ser-58, Asp-96, and Lys-125. Glu-127 contacts Mg(2+). Residue Glu-194 is the Proton acceptor of the active site.

The protein belongs to the PanB family. As to quaternary structure, homodecamer; pentamer of dimers. Mg(2+) is required as a cofactor.

The protein resides in the cytoplasm. The enzyme catalyses 3-methyl-2-oxobutanoate + (6R)-5,10-methylene-5,6,7,8-tetrahydrofolate + H2O = 2-dehydropantoate + (6S)-5,6,7,8-tetrahydrofolate. It functions in the pathway cofactor biosynthesis; (R)-pantothenate biosynthesis; (R)-pantoate from 3-methyl-2-oxobutanoate: step 1/2. Functionally, catalyzes the reversible reaction in which hydroxymethyl group from 5,10-methylenetetrahydrofolate is transferred onto alpha-ketoisovalerate to form ketopantoate. This chain is 3-methyl-2-oxobutanoate hydroxymethyltransferase, found in Methylobacterium sp. (strain 4-46).